The chain runs to 389 residues: Phospho-N-acetylmuramoyl-pentapeptide-transferase (389 aa).

The next 10 membrane-spanning stretches (helical) occupy residues 25–45, 73–93, 97–117, 135–155, 190–210, 222–242, 258–278, 286–306, 311–331, and 366–386; these read RAVM…PWVI, TMGG…WGDL, FIWI…VDDY, FWQS…VSEA, ISYP…IVGA, GLVI…AYVM, GAGE…AFLW, VFMG…VAVI, IVLF…MLQV, and QVVV…LSTL.

It belongs to the glycosyltransferase 4 family. MraY subfamily. Mg(2+) serves as cofactor.

The protein resides in the cell inner membrane. The catalysed reaction is UDP-N-acetyl-alpha-D-muramoyl-L-alanyl-gamma-D-glutamyl-meso-2,6-diaminopimeloyl-D-alanyl-D-alanine + di-trans,octa-cis-undecaprenyl phosphate = di-trans,octa-cis-undecaprenyl diphospho-N-acetyl-alpha-D-muramoyl-L-alanyl-D-glutamyl-meso-2,6-diaminopimeloyl-D-alanyl-D-alanine + UMP. Its pathway is cell wall biogenesis; peptidoglycan biosynthesis. In terms of biological role, catalyzes the initial step of the lipid cycle reactions in the biosynthesis of the cell wall peptidoglycan: transfers peptidoglycan precursor phospho-MurNAc-pentapeptide from UDP-MurNAc-pentapeptide onto the lipid carrier undecaprenyl phosphate, yielding undecaprenyl-pyrophosphoryl-MurNAc-pentapeptide, known as lipid I. This Burkholderia mallei (strain NCTC 10247) protein is Phospho-N-acetylmuramoyl-pentapeptide-transferase.